Reading from the N-terminus, the 338-residue chain is Glyceraldehyde-3-phosphate dehydrogenase (338 aa).

Residues 11 to 12 (TI) and Gly111 each bind NAD(+). A D-glyceraldehyde 3-phosphate-binding site is contributed by 140-142 (SCN). Cys141 (nucleophile) is an active-site residue. Arg169 provides a ligand contact to NAD(+). 195 to 196 (HG) lines the D-glyceraldehyde 3-phosphate pocket. Gln302 is a binding site for NAD(+).

The protein belongs to the glyceraldehyde-3-phosphate dehydrogenase family. As to quaternary structure, homotetramer.

It localises to the cytoplasm. The catalysed reaction is D-glyceraldehyde 3-phosphate + phosphate + NADP(+) = (2R)-3-phospho-glyceroyl phosphate + NADPH + H(+). It catalyses the reaction D-glyceraldehyde 3-phosphate + phosphate + NAD(+) = (2R)-3-phospho-glyceroyl phosphate + NADH + H(+). It functions in the pathway carbohydrate degradation; glycolysis; pyruvate from D-glyceraldehyde 3-phosphate: step 1/5. The polypeptide is Glyceraldehyde-3-phosphate dehydrogenase (gap) (Methanobacterium formicicum).